The primary structure comprises 155 residues: Protein-export protein SecB (155 aa).

The protein belongs to the SecB family. Homotetramer, a dimer of dimers. One homotetramer interacts with 1 SecA dimer.

The protein localises to the cytoplasm. Its function is as follows. One of the proteins required for the normal export of preproteins out of the cell cytoplasm. It is a molecular chaperone that binds to a subset of precursor proteins, maintaining them in a translocation-competent state. It also specifically binds to its receptor SecA. The polypeptide is Protein-export protein SecB (Escherichia coli O139:H28 (strain E24377A / ETEC)).